A 234-amino-acid chain; its full sequence is Sugar fermentation stimulation protein homolog (234 aa).

Belongs to the SfsA family.

The polypeptide is Sugar fermentation stimulation protein homolog (Enterobacter sp. (strain 638)).